Here is a 645-residue protein sequence, read N- to C-terminus: Threonine--tRNA ligase (645 aa).

One can recognise a TGS domain in the interval 3-64 (DMINITFPDG…EQDGTITIVT (62 aa)). The interval 247–544 (DHRKLGKELG…LLEEYKGAFP (298 aa)) is catalytic. Zn(2+) is bound by residues Cys-340, His-391, and His-521.

It belongs to the class-II aminoacyl-tRNA synthetase family. In terms of assembly, homodimer. The cofactor is Zn(2+).

The protein resides in the cytoplasm. It catalyses the reaction tRNA(Thr) + L-threonine + ATP = L-threonyl-tRNA(Thr) + AMP + diphosphate + H(+). In terms of biological role, catalyzes the attachment of threonine to tRNA(Thr) in a two-step reaction: L-threonine is first activated by ATP to form Thr-AMP and then transferred to the acceptor end of tRNA(Thr). Also edits incorrectly charged L-seryl-tRNA(Thr). This is Threonine--tRNA ligase from Halalkalibacterium halodurans (strain ATCC BAA-125 / DSM 18197 / FERM 7344 / JCM 9153 / C-125) (Bacillus halodurans).